The following is a 1200-amino-acid chain: SR-related and CTD-associated factor 4 (1200 aa).

In terms of domain architecture, CID spans 1–139 (MDAVNAFNQE…PLLDMAAGTS (139 aa)). Residue K49 is modified to N6-acetyllysine. A compositionally biased stretch (polar residues) spans 140-153 (NAAPGAENVTNNEG). Disordered regions lie at residues 140–172 (NAAP…PTNS), 299–324 (VPAS…MQQP), and 346–566 (SMQH…QIKS). The residue at position 154 (S154) is a Phosphoserine. 2 stretches are compositionally biased toward pro residues: residues 367–390 (APPP…PGMP) and 399–461 (LPQP…PPVQ). Over residues 462–471 (PTFQPTFQPQ) the composition is skewed to low complexity. Over residues 493–503 (EVKRHVPESRK) the composition is skewed to basic and acidic residues. The span at 504–541 (SRSRSPKRRRSRSGSRSRRSRHRRSRSRSRDRRRHSPR) shows a compositional bias: basic residues. Over residues 543–558 (RSQERRDREKERERRQ) the composition is skewed to basic and acidic residues. The RRM domain occupies 574-648 (TTLWVGQLDK…KSIKIAWALN (75 aa)). Disordered regions lie at residues 696-724 (WKGI…VSPI), 834-875 (VSGA…SLLG), and 927-1200 (PPHM…EAPR). S722 is subject to Phosphoserine. Pro residues-rich tracts occupy residues 856–868 (PAAP…PPVT) and 927–958 (PPHM…PPHG). Gly residues predominate over residues 965 to 978 (GMPGLGGPGPGPGG). Over residues 986–1036 (QQQPQQQQQQQQQQQQQQQQQQQQPPPQQSQTQQQPAPSQQPAPAQQQPQQ) the composition is skewed to low complexity. S1058 carries the post-translational modification Phosphoserine. A compositionally biased stretch (basic and acidic residues) spans 1063-1139 (VENDRERYGS…RGKEKHEVAD (77 aa)). Residues 1153-1162 (QVGNTDTVSE) show a composition bias toward polar residues. S1178 bears the Phosphoserine mark.

In terms of assembly, interacts with POLR2A; via C-terminal heptapeptide repeat domain (CTD) phosphorylated at 'Ser-2' and 'Ser-5'.

It localises to the nucleus. In terms of biological role, anti-terminator protein required to prevent early mRNA termination during transcription. Together with SCAF8, acts by suppressing the use of early, alternative poly(A) sites, thereby preventing the accumulation of non-functional truncated proteins. Mechanistically, associates with the phosphorylated C-terminal heptapeptide repeat domain (CTD) of the largest RNA polymerase II subunit (POLR2A), and subsequently binds nascent RNA upstream of early polyadenylation sites to prevent premature mRNA transcript cleavage and polyadenylation. Independently of SCAF8, also acts as a suppressor of transcriptional readthrough. This is SR-related and CTD-associated factor 4 from Rattus norvegicus (Rat).